A 99-amino-acid chain; its full sequence is Large ribosomal subunit protein uL23 (99 aa).

Belongs to the universal ribosomal protein uL23 family. As to quaternary structure, part of the 50S ribosomal subunit. Contacts protein L29, and trigger factor when it is bound to the ribosome.

In terms of biological role, one of the early assembly proteins it binds 23S rRNA. One of the proteins that surrounds the polypeptide exit tunnel on the outside of the ribosome. Forms the main docking site for trigger factor binding to the ribosome. The protein is Large ribosomal subunit protein uL23 of Rhodopseudomonas palustris (strain BisB18).